Consider the following 302-residue polypeptide: Succinate--CoA ligase [ADP-forming] subunit alpha (302 aa).

CoA is bound by residues 17-20 (TGST), Lys-43, and 96-98 (ITE). Residue Tyr-159 participates in substrate binding. His-247 acts as the Tele-phosphohistidine intermediate in catalysis.

It belongs to the succinate/malate CoA ligase alpha subunit family. As to quaternary structure, heterotetramer of two alpha and two beta subunits.

The enzyme catalyses succinate + ATP + CoA = succinyl-CoA + ADP + phosphate. The catalysed reaction is GTP + succinate + CoA = succinyl-CoA + GDP + phosphate. Its pathway is carbohydrate metabolism; tricarboxylic acid cycle; succinate from succinyl-CoA (ligase route): step 1/1. In terms of biological role, succinyl-CoA synthetase functions in the citric acid cycle (TCA), coupling the hydrolysis of succinyl-CoA to the synthesis of either ATP or GTP and thus represents the only step of substrate-level phosphorylation in the TCA. The alpha subunit of the enzyme binds the substrates coenzyme A and phosphate, while succinate binding and nucleotide specificity is provided by the beta subunit. The protein is Succinate--CoA ligase [ADP-forming] subunit alpha of Staphylococcus epidermidis (strain ATCC 12228 / FDA PCI 1200).